We begin with the raw amino-acid sequence, 516 residues long: RxLR effector protein PITG_15127 (516 aa).

The signal sequence occupies residues 1 to 22 (MRLYSGAILCTIATLLISVSTA). The RxLR-dEER signature appears at 48–63 (RFLRVSTQNTENGENR).

Belongs to the RxLR effector family.

The protein localises to the secreted. The protein resides in the host cell membrane. It localises to the host nucleus. It is found in the host cytoplasm. Effector that enhances P.infestans colonization of Nicotiana benthamiana leaves. The chain is RxLR effector protein PITG_15127 from Phytophthora infestans (strain T30-4) (Potato late blight agent).